Consider the following 302-residue polypeptide: N-acetylmuramic acid 6-phosphate etherase (302 aa).

The SIS domain maps to 58 to 221 (IGKAFLNGGR…STGAMVKTGK (164 aa)). Residue Glu86 is the Proton donor of the active site. Glu117 is a catalytic residue.

It belongs to the GCKR-like family. MurNAc-6-P etherase subfamily. In terms of assembly, homodimer.

It carries out the reaction N-acetyl-D-muramate 6-phosphate + H2O = N-acetyl-D-glucosamine 6-phosphate + (R)-lactate. Its pathway is amino-sugar metabolism; N-acetylmuramate degradation. Its function is as follows. Specifically catalyzes the cleavage of the D-lactyl ether substituent of MurNAc 6-phosphate, producing GlcNAc 6-phosphate and D-lactate. This chain is N-acetylmuramic acid 6-phosphate etherase, found in Clostridium botulinum (strain Loch Maree / Type A3).